The primary structure comprises 454 residues: MTWRAAASTCAALLILLWALTTEGDLKVEMMAGGTQITPLNDNVTIFCNIFYSQPLNITSMGITWFWKSLTFDKEVKVFEFFGDHQEAFRPGAIVSPWRLKSGDASLRLPGIQLEEAGEYRCEVVVTPLKAQGTVQLEVVASPASRLLLDQVGMKENEDKYMCESSGFYPEAINITWEKQTQKFPHPIEISEDVITGPTIKNMDGTFNVTSCLKLNSSQEDPGTVYQCVVRHASLHTPLRSNFTLTAARHSLSETEKTDNFSIHWWPISFIGVGLVLLIVLIPWKKICNKSSSAYTPLKCILKHWNSFDTQTLKKEHLIFFCTRAWPSYQLQDGEAWPPEGSVNINTIQQLDVFCRQEGKWSEVPYVQAFFALRDNPDLCQCCRIDPALLTVTSGKSIDDNSTKSEKQTPREHSDAVPDAPILPVSPIWEPPPATTSTTPVLSSQPPTLLLPLQ.

Residues 1–24 (MTWRAAASTCAALLILLWALTTEG) form the signal peptide. Residues 25–262 (DLKVEMMAGG…SETEKTDNFS (238 aa)) are Extracellular-facing. Residues 27 to 138 (KVEMMAGGTQ…LKAQGTVQLE (112 aa)) form the Ig-like V-type domain. 2 N-linked (GlcNAc...) asparagine glycosylation sites follow: N43 and N57. Cysteines 48 and 122 form a disulfide. Interaction with NCR3 regions lie at residues 59-62 (TSMG) and 127-130 (TPLK). The region spanning 143 to 244 (PASRLLLDQV…LHTPLRSNFT (102 aa)) is the Ig-like C1-type domain. Residues C163 and C228 are joined by a disulfide bond. N-linked (GlcNAc...) asparagine glycosylation is found at N174, N208, N216, N242, and N260. The helical transmembrane segment at 263–283 (IHWWPISFIGVGLVLLIVLIP) threads the bilayer. Residues 284–454 (WKKICNKSSS…QPPTLLLPLQ (171 aa)) are Cytoplasmic-facing. The tract at residues 291-429 (SSSAYTPLKC…APILPVSPIW (139 aa)) is retroviral-Gag-like. Residues 395 to 454 (GKSIDDNSTKSEKQTPREHSDAVPDAPILPVSPIWEPPPATTSTTPVLSSQPPTLLLPLQ) form a disordered region. Positions 397–416 (SIDDNSTKSEKQTPREHSDA) are enriched in basic and acidic residues. Residues 435–454 (TTSTTPVLSSQPPTLLLPLQ) are compositionally biased toward low complexity.

In terms of assembly, monomer. Interacts specifically with NCR3, but not with other natural killer cell-activating receptors, including NCR1, NCR2 and KLRK1. As to expression, not detected in any normal tissue tested. Expressed at the surface of several tumor cell lines including T and B-lymphomas, myeloid leukemias, melanomas, carcinomas and large T SV40 antigen-transformed cells (at protein level).

The protein localises to the cell membrane. Functionally, triggers NCR3-dependent natural killer cell activation. The protein is Natural cytotoxicity triggering receptor 3 ligand 1 (NCR3LG1) of Homo sapiens (Human).